A 1690-amino-acid chain; its full sequence is DNA-directed RNA polymerase subunit beta' (1690 aa).

Zn(2+) is bound by residues C63, C65, C78, and C81. Mg(2+) is bound by residues D753, D755, and D757. Zn(2+) is bound by residues C1107, C1295, C1302, and C1305.

It belongs to the RNA polymerase beta' chain family. As to quaternary structure, the RNAP catalytic core consists of 2 alpha, 1 beta, 1 beta' and 1 omega subunit. When a sigma factor is associated with the core the holoenzyme is formed, which can initiate transcription. Mg(2+) serves as cofactor. Zn(2+) is required as a cofactor.

It carries out the reaction RNA(n) + a ribonucleoside 5'-triphosphate = RNA(n+1) + diphosphate. Functionally, DNA-dependent RNA polymerase catalyzes the transcription of DNA into RNA using the four ribonucleoside triphosphates as substrates. The sequence is that of DNA-directed RNA polymerase subunit beta' from Thermotoga sp. (strain RQ2).